The primary structure comprises 275 residues: Elongation factor Ts (275 aa).

An involved in Mg(2+) ion dislocation from EF-Tu region spans residues 76-79; that stretch reads TDFV.

Belongs to the EF-Ts family.

The protein localises to the cytoplasm. Its function is as follows. Associates with the EF-Tu.GDP complex and induces the exchange of GDP to GTP. It remains bound to the aminoacyl-tRNA.EF-Tu.GTP complex up to the GTP hydrolysis stage on the ribosome. This is Elongation factor Ts from Corynebacterium glutamicum (strain ATCC 13032 / DSM 20300 / JCM 1318 / BCRC 11384 / CCUG 27702 / LMG 3730 / NBRC 12168 / NCIMB 10025 / NRRL B-2784 / 534).